We begin with the raw amino-acid sequence, 780 residues long: Carboxysome assembly protein CsoS2 (780 aa).

Basic and acidic residues predominate over residues 1 to 15 (MARLSSRELALERRK). Disordered regions lie at residues 1-173 (MARL…RAIE), 189-212 (KHGK…NPDL), 226-281 (TKAG…NRSV), 330-349 (NRVT…DEPG), and 382-444 (SLTQ…TGVT). Residues 5-24 (SSRELALERRKALTTSGKKS) form an N-repeat 1 repeat. A compositionally biased stretch (low complexity) spans 48–78 (AAAAVEPTAPAVSAPVKPTVSFTPASPSSSS). Residues 86 to 105 (PSRDLVLARRDALSRRGKTA) form an N-repeat 2 repeat. Positions 86–116 (PSRDLVLARRDALSRRGKTADTSRDRNRADV) are enriched in basic and acidic residues. Positions 117 to 130 (ARQTQAAAPVAASA) are enriched in low complexity. N-repeat repeat units follow at residues 175–194 (PSRA…GKTA) and 213–235 (TSRE…NKQS). 6 M-repeat repeats span residues 260-309 (KVGE…QTFC), 320-369 (KVRV…AAYC), 378-417 (KVGH…GDQY), 431-480 (KVGQ…NAFC), 490-535 (KVGF…LENA), and 541-599 (TSAV…ATAC). Residues 260 to 608 (KVGESTTSTG…CGNEAPAGTD (349 aa)) form a middle region region. Residues 264-276 (STTSTGQTVTGTQ) show a composition bias toward low complexity. 2 stretches are compositionally biased toward low complexity: residues 387–403 (GRPV…SVTG) and 432–444 (VGQS…TGVT). The tract at residues 609-749 (SHGQAPEGAA…ATVPHERKRN (141 aa)) is C-terminal domain. C-repeat repeat units lie at residues 623–669 (SVMS…TEQF) and 693–726 (EQPA…EGVS). 2 disordered regions span residues 631-661 (AQQQ…LAGG) and 686-780 (AVVS…GARG). A compositionally biased stretch (polar residues) spans 641–651 (VTGTSYEQGNR). Residues 709 to 720 (TGDDWDRGEHVT) are compositionally biased toward basic and acidic residues. Residues 750–780 (EENEWPVSRVTGSSGNTEKGSLITVSGGARG) are C-terminal peptide. Polar residues predominate over residues 759 to 768 (VTGSSGNTEK).

It belongs to the CsoS2 family. In terms of assembly, interacts via its N-terminal repeats with RuBisCO. Interacts with the major shell protein CsoS1. Unlike H.neapolitanus and predictions for P.marinus strain MIT 9313, this protein is not thought to have ribosomal frameshifting.

Functionally, required for alpha-carboxysome (Cb) assembly, mediates interaction between RuBisCO and the carboxysome shell. The protein is probably intrinsically disordered. The C-terminal repeats act as the encapsulation signal to target proteins to the Cb; they are necessary and sufficient to target both CsoS2 and foreign proteins to the Cb. The N-terminal repeats of this protein bind simultaneously to both subunits of RuBisCO. Probably also interacts with the major shell proteins (CsoS1); that interaction would increase the local concentration of CsoS2 so that it can condense RuBisCO and full carboxysomes can be formed. This Parasynechococcus marenigrum (strain WH8102) protein is Carboxysome assembly protein CsoS2.